Reading from the N-terminus, the 163-residue chain is Ribosome maturation factor RimM (163 aa).

A PRC barrel domain is found at 90–155 (VGEYYCKDLV…ADIDLNKKRL (66 aa)).

It belongs to the RimM family. Binds ribosomal protein uS19.

It is found in the cytoplasm. Its function is as follows. An accessory protein needed during the final step in the assembly of 30S ribosomal subunit, possibly for assembly of the head region. Essential for efficient processing of 16S rRNA. May be needed both before and after RbfA during the maturation of 16S rRNA. It has affinity for free ribosomal 30S subunits but not for 70S ribosomes. The sequence is that of Ribosome maturation factor RimM from Neorickettsia sennetsu (strain ATCC VR-367 / Miyayama) (Ehrlichia sennetsu).